Here is a 71-residue protein sequence, read N- to C-terminus: Large ribosomal subunit protein uL29 (71 aa).

It belongs to the universal ribosomal protein uL29 family.

This Methanocella arvoryzae (strain DSM 22066 / NBRC 105507 / MRE50) protein is Large ribosomal subunit protein uL29.